The sequence spans 297 residues: N-acetylneuraminate lyase (297 aa).

2 residues coordinate aceneuramate: Ser-47 and Thr-48. Tyr-137 serves as the catalytic Proton donor. Lys-165 acts as the Schiff-base intermediate with substrate in catalysis. Residues Thr-167, Gly-189, Asp-191, Glu-192, and Ser-208 each contribute to the aceneuramate site.

The protein belongs to the DapA family. NanA subfamily. Homotetramer.

It localises to the cytoplasm. The enzyme catalyses aceneuramate = aldehydo-N-acetyl-D-mannosamine + pyruvate. Its pathway is amino-sugar metabolism; N-acetylneuraminate degradation; D-fructose 6-phosphate from N-acetylneuraminate: step 1/5. Catalyzes the reversible aldol cleavage of N-acetylneuraminic acid (sialic acid; Neu5Ac) to form pyruvate and N-acetylmannosamine (ManNAc) via a Schiff base intermediate. In Salmonella typhimurium (strain LT2 / SGSC1412 / ATCC 700720), this protein is N-acetylneuraminate lyase.